The chain runs to 492 residues: Transcription factor IIIB 60 kDa subunit (492 aa).

Residues 1 to 30 (MGCPNCGSTTFESDTASGNTYCTQCGVVVE) form a TFIIB-type zinc finger. Zn(2+) contacts are provided by cysteine 3, cysteine 6, cysteine 22, and cysteine 25. Positions 440 to 468 (QPRKRRRYRPRDSTSDGIADTAAESAKEM) are disordered.

This sequence belongs to the TFIIB family. TFIIIB comprises the TATA-binding protein (TBP), the B-related factor (BRF) and a third subunit (Potential). Interacts with maf1.

Its subcellular location is the nucleus. General activator of RNA polymerase III transcription. This Schizosaccharomyces pombe (strain 972 / ATCC 24843) (Fission yeast) protein is Transcription factor IIIB 60 kDa subunit (brf1).